The primary structure comprises 347 residues: NADH-ubiquinone oxidoreductase chain 2 (347 aa).

Transmembrane regions (helical) follow at residues 3–23 (PLIL…VMMS), 25–45 (HWLM…PLLM), 59–79 (YFLT…INLL), 96–116 (IIMT…FWVP), 148–170 (GINL…WGGL), 178–198 (ILAY…AFNP), 200–220 (MTLL…MLFM), 247–267 (IMLS…WMII), 276–296 (ITLA…YMRL), and 326–346 (LPML…ITLL).

It belongs to the complex I subunit 2 family. In terms of assembly, core subunit of respiratory chain NADH dehydrogenase (Complex I) which is composed of 45 different subunits. Interacts with TMEM242.

It localises to the mitochondrion inner membrane. It carries out the reaction a ubiquinone + NADH + 5 H(+)(in) = a ubiquinol + NAD(+) + 4 H(+)(out). Its function is as follows. Core subunit of the mitochondrial membrane respiratory chain NADH dehydrogenase (Complex I) which catalyzes electron transfer from NADH through the respiratory chain, using ubiquinone as an electron acceptor. Essential for the catalytic activity and assembly of complex I. In Saccopteryx leptura (Lesser sac-winged bat), this protein is NADH-ubiquinone oxidoreductase chain 2.